The primary structure comprises 555 residues: MDSDEGYNYEFDEDEECSEEDSGAEEEEDDDEDEPDDDNLDLGEVELVEPGLGVGGERDGLLCGETGGGGGSALGPGGGGGGGGGGGGPGHEQEEDYRYEVLTAEQILQHMVECIREVNEVIQNPATITRILLSHFNWDKEKLMERYFDGNLEKLFAECHVINPSKKSRTRQMNTRSSAQDMPCQICYLNYPNSYFTGLECGHKFCMQCWSEYLTTKIMEEGMGQTISCPAHGCDILVDDNTVMRLITDSKVKLKYQHLITNSFVECNRLLKWCPAPDCHHVVKVQYPDAKPVRCKCGRQFCFNCGENWHDPVKCKWLKKWIKKCDDDSETSNWIAANTKECPKCHVTIEKDGGCNHMVCRNQNCKAEFCWVCLGPWEPHGSAWYNCNRYNEDDAKAARDAQERSRAALQRYLFYCNRYMNHMQSLRFEHKLYAQVKQKMEEMQQHNMSWIEVQFLKKAVDVLCQCRATLMYTYVFAFYLKKNNQSIIFENNQADLENATEVLSGYLERDISQDSLQDIKQKVQDKYRYCESRRRVLLQHVHEGYEKDLWEYIED.

Residues 1-47 (MDSDEGYNYEFDEDEECSEEDSGAEEEEDDDEDEPDDDNLDLGEVEL) show a composition bias toward acidic residues. Residues 1–93 (MDSDEGYNYE…GGGGGPGHEQ (93 aa)) form a disordered region. Positions 65–90 (ETGGGGGSALGPGGGGGGGGGGGGPG) are enriched in gly residues. The interval 103–151 (TAEQILQHMVECIREVNEVIQNPATITRILLSHFNWDKEKLMERYFDGN) is UBA-like. Lysine 140 carries the post-translational modification N6-acetyllysine. The segment at 180-391 (QDMPCQICYL…SAWYNCNRYN (212 aa)) is TRIAD supradomain. Residues cysteine 184, cysteine 187, cysteine 201, histidine 203, cysteine 206, cysteine 209, cysteine 229, cysteine 234, cysteine 274, cysteine 279, cysteine 295, cysteine 297, cysteine 302, cysteine 305, histidine 310, cysteine 315, cysteine 342, and cysteine 345 each contribute to the Zn(2+) site. The RING-type 1 zinc-finger motif lies at 184–234 (CQICYLNYPNSYFTGLECGHKFCMQCWSEYLTTKIMEEGMGQTISCPAHGC). The segment at 254 to 315 (LKYQHLITNS…GENWHDPVKC (62 aa)) adopts an IBR-type zinc-finger fold. Residues 342–373 (CPKCHVTIEKDGGCNHMVCRNQNCKAEFCWVC) form an RING-type 2; atypical zinc finger. The active site involves cysteine 355. Cysteine 360, cysteine 365, cysteine 370, cysteine 373, histidine 380, and cysteine 387 together coordinate Zn(2+). The ariadne domain stretch occupies residues 406–555 (RAALQRYLFY…EKDLWEYIED (150 aa)).

Belongs to the RBR family. Ariadne subfamily. In terms of assembly, interacts (via the first RING-type zinc finger) with UBE2L3. Associates with cullin-RING ubiquitin ligase (CRL) complexes containing CUL1, CUL2 and CUL3. Interacts with neddylated CUL1. Interacts with neddylated CUL2. Interacts with neddylated CUL3. Interacts with neddylated CUL4A. As to expression, widely expressed.

It localises to the cytoplasm. It is found in the nucleus. The protein localises to the cajal body. It catalyses the reaction [E2 ubiquitin-conjugating enzyme]-S-ubiquitinyl-L-cysteine + [acceptor protein]-L-lysine = [E2 ubiquitin-conjugating enzyme]-L-cysteine + [acceptor protein]-N(6)-ubiquitinyl-L-lysine.. It participates in protein modification; protein ubiquitination. With respect to regulation, autoinhibited by the ariadne domain, which masks the second RING-type zinc finger that contains the active site and inhibits the E3 activity. Inhibition is relieved upon binding to neddylated cullin-RING ubiquitin ligase complexes, which activate the E3 ligase activity of ARIH1. Functionally, E3 ubiquitin-protein ligase, which catalyzes ubiquitination of target proteins together with ubiquitin-conjugating enzyme E2 UBE2L3. Acts as an atypical E3 ubiquitin-protein ligase by working together with cullin-RING ubiquitin ligase (CRL) complexes and initiating ubiquitination of CRL substrates: associates with CRL complexes and specifically mediates addition of the first ubiquitin on CRLs targets. The initial ubiquitin is then elongated by CDC34/UBE2R1 and UBE2R2. E3 ubiquitin-protein ligase activity is activated upon binding to neddylated cullin-RING ubiquitin ligase complexes. Plays a role in protein translation in response to DNA damage by mediating ubiquitination of EIF4E2, the consequences of EIF4E2 ubiquitination are however unclear. According to a report, EIF4E2 ubiquitination leads to promote EIF4E2 cap-binding and protein translation arrest. According to another report EIF4E2 ubiquitination leads to its subsequent degradation. Acts as the ligase involved in ISGylation of EIF4E2. In vitro, controls the degradation of the LINC (LInker of Nucleoskeleton and Cytoskeleton) complex member SUN2 and may therefore have a role in the formation and localization of the LINC complex, and as a consequence, may act in nuclear subcellular localization and nuclear morphology. This Mus musculus (Mouse) protein is E3 ubiquitin-protein ligase ARIH1 (Arih1).